Here is a 444-residue protein sequence, read N- to C-terminus: Signal recognition particle 54 kDa protein (444 aa).

GTP contacts are provided by residues 102-109 (GVQGSGKT), 184-188 (DTAGR), and 244-247 (SKMD).

Belongs to the GTP-binding SRP family. SRP54 subfamily. Part of the signal recognition particle protein translocation system, which is composed of SRP and FtsY. Archaeal SRP consists of a 7S RNA molecule of 300 nucleotides and two protein subunits: SRP54 and SRP19.

The protein localises to the cytoplasm. It carries out the reaction GTP + H2O = GDP + phosphate + H(+). Functionally, involved in targeting and insertion of nascent membrane proteins into the cytoplasmic membrane. Binds to the hydrophobic signal sequence of the ribosome-nascent chain (RNC) as it emerges from the ribosomes. The SRP-RNC complex is then targeted to the cytoplasmic membrane where it interacts with the SRP receptor FtsY. In Sulfolobus acidocaldarius (strain ATCC 33909 / DSM 639 / JCM 8929 / NBRC 15157 / NCIMB 11770), this protein is Signal recognition particle 54 kDa protein.